Here is a 254-residue protein sequence, read N- to C-terminus: Vesicle transport protein USE1 (254 aa).

The Cytoplasmic portion of the chain corresponds to 1 to 228 (MAYISENELK…AYKCGYDCFK (228 aa)). A helical; Anchor for type IV membrane protein membrane pass occupies residues 229 to 249 (VMLIVLIFMSFVSMVLMMKIF). The Lumenal portion of the chain corresponds to 250–254 (KKAST).

Belongs to the USE1 family.

The protein localises to the endoplasmic reticulum membrane. Its function is as follows. SNARE that may be involved in targeting and fusion of Golgi-derived retrograde transport vesicles with the ER. This chain is Vesicle transport protein USE1, found in Caenorhabditis elegans.